Reading from the N-terminus, the 358-residue chain is MEEISARLSAVQDKILDIYEADKNDLTSQIEHWKLIRMECAIMYTARQMGISHLCHQVVPSLVASKTKAFQVIELQMALETLNASPYKTDEWTLQQTSLEVWLSEPQKCFKKKGITVTVQYDNDKANTMDYTNWSEIYIIEETTCTLVAGEVDYVGLYYIHGNEKTYFKYFKEDAKKYSKTQLWEVHVGSRVIVCPTSIPSDQISTTETADPKTTEATNNESTQGTKRRRLDLPDSRDNTQYSTKYTDCAVDSRPRGGGLHSTTNCTYKGRNVCSSKVSPIVHLKGDPNSLKCLRYRLKPFKDLYCNMSSTWHWTSDDKGDKVGIVTVTYTTETQRQLFLNTVKIPPTVQISTGVMSL.

Positions 1-200 (MEEISARLSA…RVIVCPTSIP (200 aa)) are transactivation domain. Residues 203–238 (QISTTETADPKTTEATNNESTQGTKRRRLDLPDSRD) form a disordered region. Positions 215 to 225 (TEATNNESTQG) are enriched in polar residues. The segment at 278–358 (VSPIVHLKGD…VQISTGVMSL (81 aa)) is DNA-binding domain. Lys-285 participates in a covalent cross-link: Glycyl lysine isopeptide (Lys-Gly) (interchain with G-Cter in SUMO).

This sequence belongs to the papillomaviridae E2 protein family. As to quaternary structure, binds DNA as homodimer. Interacts with protein E1; this interaction greatly increases E1 DNA-binding activity. Interacts with protein L1; this interaction enhances E2-dependent replication and transcription activation. Interacts with protein L2; this interaction inhibits E2 transcriptional activity but not DNA replication function E2. Interacts with protein E7; this interaction inhibits E7 oncogenic activity. Interacts with host TAF1; this interaction modulates E2-dependent transcriptional regulation. Interacts with host BRD4; this interaction mediates E2 transcriptional activation function. Additionally, the interaction with host BRD4 on mitotic chromosomes mediates tethering of the viral genome. Interacts with host TOPBP1; this interaction is required for optimal viral DNA replication. Phosphorylated. In terms of processing, sumoylation plays a regulatory role in E2 transcriptional activity.

The protein localises to the host nucleus. Plays a role in the initiation of viral DNA replication. A dimer of E2 interacts with a dimer of E1 in order to improve specificity of E1 DNA binding activity. Once the complex recognizes and binds DNA at specific sites, the E2 dimer is removed from DNA. E2 also regulates viral transcription through binding to the E2RE response element (5'-ACCNNNNNNGGT-3') present in multiple copies in the regulatory regions of the viral genome. Activates or represses transcription depending on E2RE's position with regards to proximal promoter elements including the TATA-box. Repression occurs by sterically hindering the assembly of the transcription initiation complex. In Human papillomavirus 58, this protein is Regulatory protein E2.